The sequence spans 1461 residues: Pleiotropic drug resistance protein 2 (1461 aa).

Positions 172 to 445 (LGLIHLSPSK…FEYMGFRCPE (274 aa)) constitute an ABC transporter 1 domain. An ATP-binding site is contributed by 205-212 (GPPGSGKT). The ABC transmembrane type-2 1 domain maps to 523–736 (ELFKSCFTRE…GQNAIAINEF (214 aa)). The next 6 helical transmembrane spans lie at 541–561 (FLYIFKTTQITIMATIALTVF), 577–597 (FWGALFFSLINVMFNGMQELA), 622–642 (LPIWVLKIPISLVESAIWIIL), 660–680 (LLAFIGVHQMALSLFRFIAAA), 685–705 (VVANTLGTFTLLMVFILGGFI), and 771–791 (ISIGALFGFSLLFNVLFIAAL). The region spanning 859–1111 (LAFNHVNYYV…KLVEYFETIP (253 aa)) is the ABC transporter 2 domain. 904–911 (GVSGAGKT) contributes to the ATP binding site. The ABC transmembrane type-2 2 domain occupies 1184–1398 (TQCKACFWKQ…TIYGIFASQV (215 aa)). 7 helical membrane-spanning segments follow: residues 1203 to 1223 (YNAIRFFMTVIIGILFGVIFW), 1243 to 1263 (YAAVMFLGATNASAVQSVVAI), 1291 to 1311 (TIYVAIQTFVYSLLLFSMIGY), 1321 to 1341 (FYYFIFMCFTYFSMYGMMVVA), 1348 to 1368 (IAAIVMSFFLSFWNLFSGFLI), 1379 to 1399 (WYYWASPVAWTIYGIFASQVG), and 1430 to 1450 (FLLVVVFAHVGWVLLFFFVFA).

The protein belongs to the ABC transporter superfamily. ABCG family. PDR (TC 3.A.1.205) subfamily.

It is found in the membrane. May be a general defense protein. This Nicotiana plumbaginifolia (Leadwort-leaved tobacco) protein is Pleiotropic drug resistance protein 2 (PDR2).